A 112-amino-acid chain; its full sequence is Larval cuticle protein III/IV (112 aa).

The signal sequence occupies residues 1 to 16 (MFKILLVCALAALVAA). The region spanning 31 to 92 (PDGFKTVVSL…PSSDLLPVAP (62 aa)) is the Chitin-binding type R&amp;R domain.

Its function is as follows. Component of the larval cuticle. The chain is Larval cuticle protein III/IV (Lcp3) from Drosophila miranda (Fruit fly).